The sequence spans 513 residues: Histidine ammonia-lyase (513 aa).

The segment at residues 144 to 146 (ASG) is a cross-link (5-imidazolinone (Ala-Gly)). At Ser145 the chain carries 2,3-didehydroalanine (Ser).

Belongs to the PAL/histidase family. Contains an active site 4-methylidene-imidazol-5-one (MIO), which is formed autocatalytically by cyclization and dehydration of residues Ala-Ser-Gly.

It localises to the cytoplasm. The catalysed reaction is L-histidine = trans-urocanate + NH4(+). It functions in the pathway amino-acid degradation; L-histidine degradation into L-glutamate; N-formimidoyl-L-glutamate from L-histidine: step 1/3. The chain is Histidine ammonia-lyase from Streptococcus gordonii (strain Challis / ATCC 35105 / BCRC 15272 / CH1 / DL1 / V288).